The sequence spans 452 residues: Maltoporin (452 aa).

A signal peptide spans 1 to 25; sequence MMITLRKLPLAVAVAAGVMSAQAMA.

It belongs to the porin LamB (TC 1.B.3) family. Homotrimer formed of three 18-stranded antiparallel beta-barrels, containing three independent channels.

The protein localises to the cell outer membrane. It catalyses the reaction beta-maltose(in) = beta-maltose(out). In terms of biological role, involved in the transport of maltose and maltodextrins. The chain is Maltoporin from Salmonella paratyphi A (strain ATCC 9150 / SARB42).